Here is a 548-residue protein sequence, read N- to C-terminus: Sensor protein TdiS (548 aa).

The 70-residue stretch at 20–89 (DPATGYEVIF…IGENYGHFFE (70 aa)) folds into the PAS 1 domain. Positions 94–145 (FKDERPIIRKDGSVIWCIVTGSLLDSSNPRLGSIWVVQDISEHKRTEDDLKA) constitute a PAC 1 domain. In terms of domain architecture, PAS 2 spans 185–256 (HREKYEKLFH…RKRLPWRIHD (72 aa)). A PAC 2 domain is found at 263–314 (KNIEIGMREEESRKQRWLSVSSSLLELKGQKMVVAAFTDITYRKRIEELERL). In terms of domain architecture, Histidine kinase spans 334–548 (ALAHQMGQPL…GSKFQFTLPI (215 aa)). At H337 the chain carries Phosphohistidine; by autocatalysis.

Autophosphorylated.

The enzyme catalyses ATP + protein L-histidine = ADP + protein N-phospho-L-histidine.. Its function is as follows. Member of the two-component regulatory system TdiR/TdiS, which probably regulates transcription of toluene catabolic genes (bss operon). May activate TdiR by phosphorylation. The chain is Sensor protein TdiS (tdiS) from Thauera aromatica.